We begin with the raw amino-acid sequence, 300 residues long: MDSESLDFSSADTVILRSPNAGTNPDGHPDTVECPDFDTDIPKTSDDSSKMDNKGSSSSSKAVKDLLELAAKSQGIVVTDVMQNTAIALHHNLGLDASSLDWFVAGITFANNSMIMEKMVSAIKELQIEVRNIQVASSGIKGTSEELVSKMKANKNDIVKELVKTRDSVLSAMGGILSAPEIEQQPVKTVTIGASQGRRKSTVVPPIEINPELESPVLSKTVSTATPEERIRHEKEKLLADLDWEIGEIAQYTPLIVDFLVPDDILAMAADGLTPELKEKIQNEIIENHIALMALEEYSS.

The span at Met-1–Asp-12 shows a compositional bias: polar residues. The segment at Met-1–Ser-59 is disordered. Positions Asp-40–Asn-53 are enriched in basic and acidic residues.

Homotrimer when phosphorylated. This trimer is stabilized by binding to the L protein. Binds soluble protein N, and ribonucleocapsid. Phosphorylated by host kinases.

Its subcellular location is the virion. It localises to the host cytoplasm. Functionally, non catalytic polymerase cofactor and regulatory protein that plays a role in viral transcription and replication. Stabilizes the RNA polymerase L to the N-RNA template and binds the soluble protein N, preventing it from encapsidating non-genomic RNA. This chain is Phosphoprotein (P), found in Embergeria (Garden lettuce).